The sequence spans 211 residues: Ribosome maturation factor RimM (211 aa).

Positions 111–182 (PDAWYDHQLV…TLVVTPPLGL (72 aa)) constitute a PRC barrel domain. The tract at residues 184 to 211 (EEIPDETPTAEPTPAEAAEPAPEGDDAR) is disordered. Residues 189–204 (ETPTAEPTPAEAAEPA) show a composition bias toward low complexity.

Belongs to the RimM family. In terms of assembly, binds ribosomal protein uS19.

The protein resides in the cytoplasm. Functionally, an accessory protein needed during the final step in the assembly of 30S ribosomal subunit, possibly for assembly of the head region. Essential for efficient processing of 16S rRNA. May be needed both before and after RbfA during the maturation of 16S rRNA. It has affinity for free ribosomal 30S subunits but not for 70S ribosomes. This is Ribosome maturation factor RimM from Clavibacter michiganensis subsp. michiganensis (strain NCPPB 382).